A 117-amino-acid chain; its full sequence is Acrylate reductase cytochrome subunit (117 aa).

An N-terminal signal peptide occupies residues methionine 1 to alanine 22. The heme c site is built by histidine 29, cysteine 37, cysteine 40, histidine 41, cysteine 54, cysteine 57, histidine 58, histidine 79, histidine 83, cysteine 90, cysteine 93, histidine 94, histidine 97, cysteine 104, cysteine 107, and histidine 108.

As to quaternary structure, the ArdAB flavocytochrome c is composed of a FAD-containing subunit (ArdA) and a heme c-containing subunit (ArdB). Heme c is required as a cofactor.

It localises to the periplasm. With respect to regulation, methacrylate acts as a competitive inhibitor of the acrylate reductase activity and suppresses the reductase activity in dose-dependent manner. Heme c-containing subunit of the ArdAB flavocytochrome c, which catalyzes the reduction of acrylate to propanoate and supports dimethylsulfoniopropionate-dependent anaerobic respiration. In vitro, can use the artificial electron donor methyl viologen. The natural electron donor is probably a low-potential cytochrome c. Also shows weak activity toward methacrylate in vitro (at a 22-fold lower rate) but cannot use other tested 2-enoates, including crotonic, fumaric, sorbic, urocanic, cinnamic, p-coumaric, caffeic or ferulic acids. The protein catalyzes a unidirectional reaction and cannot oxidize propanoate with phenazine metasulfate and dichlorophenolindophenol as electron acceptors. The polypeptide is Acrylate reductase cytochrome subunit (Shewanella woodyi (strain ATCC 51908 / MS32)).